The sequence spans 1404 residues: MKDLLNLFNQQRQTLDFDAIKIALASPDLIRSWSYGEVKKPETINYRTFKPERDGLFCAAIFGPIKDYECLCGKYKRMKHRGVVCEKCGTEVTLAKVRRERMGHIDLASPVAHIWFLKSLPSRIGLMLDMTLRDIERVLYFEAYVVTEPGLTPLERRQLLTEEQYLTARQEYNDDFDAAMGAEAVYELLRTIDLQSEMTRLREEIASTGSETKLKRLTKRIKLIEAFLESGNRPEWMVMTVLPVLPPDLRPLVPLDGGRFATSDLNDLYRRVINRNNRLRRLLELNAPDIIVRNEKRMLQESVDALLDNGRRGRAITGTNKRPLKSLADMIKGKQGRFRQNLLGKRVDYSGRSVITVGPYLKLHQCGLPKKMALELFKPFVFAKLQRRGLATTIKAAKKLVEREEAEVWDILEEVIREHPVLLNRAPTLHRLGIQAFEPVLIEGKAIQLHPLVCTAFNADFDGDQMAVHVPLSLEAQLEARALMMSTNNILSPANGEPIIVPSQDVVLGLYYMSRALENKKGEGMVFANTSEVKRAYDNRVVELHAKVKVRITQVDVEAGGKRSSGTSIVDTTVGRALLSEILPEGLPFQLANTEMTKKNISRLINSSYRLLGLKDTVVFADKLMYTGYAYATRAGVSIGIDDMLIPDEKKGILTEAEAEVLEIQEQYQSGLVTAGERYNKVVDIWSRTSERIAKAMMDTIGTEKVENAKGETIDQKSMNSLYIMADSGARGSQAQIRQLAGMRGLMARPDGSIIETPIKANFREGLNVQEYFNSTHGARKGLADTALKTANSGYLTRRLVDVAQDVVITEIDCGTTEGLIMTPIVEGGDVVEPLRERVLGRVVAEDVYLPGNDEEPIVTRNTLLDEAWVAKLEDASVQSVKVRSTISCESSFGVCARCYGRDLARGHQVNIGEAVGVIAAQSIGEPGTQLTMRTFHIGGAASRAAAVDNITVKTTGSVKFNNLKSVAHASGSLVAVSRSGELSVLDGHGRERERYKLPYGATITAKDGDAVKAGQSVANWDPHNHPIVSEVAGFIRFIDFVDGVTVIEKTDELTGLASREITDPKRRGAQAKELRPIVRIVDAKGNDLTIPNTDLPAQYLLPPRSIVNLQDGAAVGVGDVVAKIPQEASKTRDITGGLPRVADLFEARKPKDPAILAERSGIISFGKDTKGKQRLIIKDTDGSEHEELIPKYRQIIVFEGEHVTKGETVVDGEPSPQDILRLLGVEPLAAYLVKEIQDVYRLQGVKINDKHIEVITRQMLRKVEIVDQGNSKFLNGEQVERQRVIEENARLVKRNELPAKYDPVLLGITKASLATESFISAASFQETTRVLTEAAVRGTRDNLRGLKENVIVGRLIPAGTGLAYHAGRRKASGLTDSEMETLSGKPAVAEPVAAVADAGADEE.

Residues Cys-70, Cys-72, Cys-85, and Cys-88 each contribute to the Zn(2+) site. The Mg(2+) site is built by Asp-460, Asp-462, and Asp-464. Zn(2+)-binding residues include Cys-814, Cys-889, Cys-896, and Cys-899.

The protein belongs to the RNA polymerase beta' chain family. The RNAP catalytic core consists of 2 alpha, 1 beta, 1 beta' and 1 omega subunit. When a sigma factor is associated with the core the holoenzyme is formed, which can initiate transcription. The cofactor is Mg(2+). Requires Zn(2+) as cofactor.

It carries out the reaction RNA(n) + a ribonucleoside 5'-triphosphate = RNA(n+1) + diphosphate. Functionally, DNA-dependent RNA polymerase catalyzes the transcription of DNA into RNA using the four ribonucleoside triphosphates as substrates. This Xanthomonas axonopodis pv. citri (strain 306) protein is DNA-directed RNA polymerase subunit beta'.